A 594-amino-acid chain; its full sequence is UvrABC system protein C (594 aa).

A GIY-YIG domain is found at 14–91 (DQPGCYLMKD…IKKHDPKYNI (78 aa)). The UVR domain maps to 196 to 231 (KEVRSELETKMYEASEKLEFERAKELRDQIAHIDAI).

This sequence belongs to the UvrC family. In terms of assembly, interacts with UvrB in an incision complex.

It localises to the cytoplasm. Its function is as follows. The UvrABC repair system catalyzes the recognition and processing of DNA lesions. UvrC both incises the 5' and 3' sides of the lesion. The N-terminal half is responsible for the 3' incision and the C-terminal half is responsible for the 5' incision. The polypeptide is UvrABC system protein C (Bacillus thuringiensis (strain Al Hakam)).